Reading from the N-terminus, the 246-residue chain is Pyridoxine 5'-phosphate synthase (246 aa).

Asn6 provides a ligand contact to 3-amino-2-oxopropyl phosphate. 8–9 (DH) is a binding site for 1-deoxy-D-xylulose 5-phosphate. A 3-amino-2-oxopropyl phosphate-binding site is contributed by Arg17. The active-site Proton acceptor is His49. Residues Arg51 and His56 each coordinate 1-deoxy-D-xylulose 5-phosphate. The Proton acceptor role is filled by Glu76. Residue Thr106 participates in 1-deoxy-D-xylulose 5-phosphate binding. Catalysis depends on His196, which acts as the Proton donor. Residues Gly197 and 219–220 (GH) each bind 3-amino-2-oxopropyl phosphate.

It belongs to the PNP synthase family. As to quaternary structure, homooctamer; tetramer of dimers.

The protein resides in the cytoplasm. It carries out the reaction 3-amino-2-oxopropyl phosphate + 1-deoxy-D-xylulose 5-phosphate = pyridoxine 5'-phosphate + phosphate + 2 H2O + H(+). It participates in cofactor biosynthesis; pyridoxine 5'-phosphate biosynthesis; pyridoxine 5'-phosphate from D-erythrose 4-phosphate: step 5/5. Functionally, catalyzes the complicated ring closure reaction between the two acyclic compounds 1-deoxy-D-xylulose-5-phosphate (DXP) and 3-amino-2-oxopropyl phosphate (1-amino-acetone-3-phosphate or AAP) to form pyridoxine 5'-phosphate (PNP) and inorganic phosphate. This Akkermansia muciniphila (strain ATCC BAA-835 / DSM 22959 / JCM 33894 / BCRC 81048 / CCUG 64013 / CIP 107961 / Muc) protein is Pyridoxine 5'-phosphate synthase.